Consider the following 241-residue polypeptide: Exosome complex component RRP41 homolog (241 aa).

At Met1 the chain carries N-acetylmethionine.

This sequence belongs to the RNase PH family. As to quaternary structure, component of the RNA exosome complex. Interacts with RPP4.

The protein localises to the cytoplasm. The protein resides in the nucleus. Its subcellular location is the nucleolus. Its function is as follows. Non-catalytic component of the RNA exosome complex which has 3'-&gt;5' exoribonuclease activity and participates in a multitude of cellular RNA processing, maturation and degradation events. In vitro, is a processive phosphorolytic exonuclease and requires a single-stranded poly(A) tail on the substrate RNA for its activity. Can complement the growth defect of a yeast mutant lacking RRP41 exonuclease. Required for normal development of female gametophytes. The chain is Exosome complex component RRP41 homolog from Arabidopsis thaliana (Mouse-ear cress).